The following is a 112-amino-acid chain: UPF0102 protein CHAB381_0216 (112 aa).

Belongs to the UPF0102 family.

The sequence is that of UPF0102 protein CHAB381_0216 from Campylobacter hominis (strain ATCC BAA-381 / DSM 21671 / CCUG 45161 / LMG 19568 / NCTC 13146 / CH001A).